Consider the following 240-residue polypeptide: Ribonuclease HII (240 aa).

Residues 27-226 enclose the RNase H type-2 domain; it reads GPVAGVDEAG…REARSLRLED (200 aa). A divalent metal cation-binding residues include D33, E34, and D127.

The protein belongs to the RNase HII family. The cofactor is Mn(2+). It depends on Mg(2+) as a cofactor.

It is found in the cytoplasm. The enzyme catalyses Endonucleolytic cleavage to 5'-phosphomonoester.. Its function is as follows. Endonuclease that specifically degrades the RNA of RNA-DNA hybrids. This is Ribonuclease HII from Frankia casuarinae (strain DSM 45818 / CECT 9043 / HFP020203 / CcI3).